The sequence spans 381 residues: Penicillin-binding protein 4 (381 aa).

The Acyl-ester intermediate role is filled by S60. Residues 271–291 form a helical membrane-spanning segment; it reads VAGCLDTWSFMATGWGHGWAL. 299 to 308 provides a ligand contact to NAD(+); the sequence is GYGHDGASGG. A helical transmembrane segment spans residues 315–340; the sequence is VVPGSGVVAALLTNGGVATSFFTDLF.

It belongs to the beta-lactamase family.

Its subcellular location is the cell membrane. In terms of biological role, involved in cell wall biosynthesis and may also act as a sensor of external penicillins. This is Penicillin-binding protein 4 (pbp) from Amycolatopsis lactamdurans (Nocardia lactamdurans).